A 52-amino-acid polypeptide reads, in one-letter code: Defensin-like protein 2B (52 aa).

Intrachain disulfides connect C4-C52, C16-C37, C22-C46, and C26-C48.

As to quaternary structure, forms oligomers in its native state.

Functionally, possesses antifungal activity sensitive to inorganic cations. This is Defensin-like protein 2B from Sinapis alba (White mustard).